A 201-amino-acid chain; its full sequence is LexA repressor (201 aa).

Positions 28–48 form a DNA-binding region, H-T-H motif; the sequence is RAEIAARLGFRSPNAAEEHLK. Residues serine 118 and lysine 155 each act as for autocatalytic cleavage activity in the active site.

It belongs to the peptidase S24 family. As to quaternary structure, homodimer.

The catalysed reaction is Hydrolysis of Ala-|-Gly bond in repressor LexA.. Represses a number of genes involved in the response to DNA damage (SOS response), including recA and lexA. In the presence of single-stranded DNA, RecA interacts with LexA causing an autocatalytic cleavage which disrupts the DNA-binding part of LexA, leading to derepression of the SOS regulon and eventually DNA repair. In Photorhabdus laumondii subsp. laumondii (strain DSM 15139 / CIP 105565 / TT01) (Photorhabdus luminescens subsp. laumondii), this protein is LexA repressor.